Here is a 357-residue protein sequence, read N- to C-terminus: O-methyltransferase pgmB (357 aa).

Aspartate 206 contacts S-adenosyl-L-methionine. Histidine 256 acts as the Proton acceptor in catalysis.

It belongs to the class I-like SAM-binding methyltransferase superfamily. Cation-independent O-methyltransferase family.

It functions in the pathway pigment biosynthesis. It participates in secondary metabolite biosynthesis. In terms of biological role, O-methyltransferase; part of the gene cluster that mediates the biosynthesis of pleosporalin A, ascomycone A, as well as a third cryptic naphthoquinone derived pigment, all responsible for the coloration of conidia. Specifically methylates position C-6 of the pgmA product 3-acetonyl-1,6,8-trihydroxy-2-naphthaldehyde to yield fusarubinaldehyde. The pathway begins with the biosynthesis of the cyclized heptaketide 3-acetonyl-1,6,8-trihydroxy-2-naphthaldehyde by the NR-PKS pgmA. The C-6 hydroxyl group is further methylated by the O-methyltransferase pgmB to yield fusarubinaldehyde which is in turn oxidized by the cytochrome P450 monooxygenase pgmC at C-9. The C-1 hydroxyl group is then methylated spontaneously. Although pgmE, pgmD and pgmH are essential for the production of pleosporalin A, it is not the case for the 2 other final products and it remains difficult to assign a specific function to each enzyme. PgmF and pgmG seem not to be involved in pigment biosynthesis although they were regulated by the cluster-specific transcription factor pgmR. The polypeptide is O-methyltransferase pgmB (Aspergillus terreus (strain NIH 2624 / FGSC A1156)).